Reading from the N-terminus, the 184-residue chain is Putative serine carboxypeptidase-like 52 (184 aa).

Residues 1–22 form the signal peptide; it reads MRTFSPKLLLLLLLVLRHHAES. An N-linked (GlcNAc...) asparagine glycan is attached at Asn-93.

The protein belongs to the peptidase S10 family.

It localises to the secreted. The sequence is that of Putative serine carboxypeptidase-like 52 (SCPL52) from Arabidopsis thaliana (Mouse-ear cress).